The following is a 201-amino-acid chain: MRLFVGLGNPGAKYARNRHNIGFMAVDEIARRHGFSPWRRRFQGETSEGALGTERVILLKPTTYMNDSGRSVQEAAGFFKIAPGDVTVFHDELELPPGKVRVKVGGGIAGHNGLRSISAHIGNDYRRVRLGIGHPGVKELVHGHVLSDFAKADNDWVATLCDAVAEHAALIAKGTDATFANRVHLAMQAKGFLTKDDNGKE.

Y14 is a binding site for tRNA. The active-site Proton acceptor is the H19. Y64, N66, and N112 together coordinate tRNA.

This sequence belongs to the PTH family. As to quaternary structure, monomer.

It is found in the cytoplasm. The catalysed reaction is an N-acyl-L-alpha-aminoacyl-tRNA + H2O = an N-acyl-L-amino acid + a tRNA + H(+). In terms of biological role, hydrolyzes ribosome-free peptidyl-tRNAs (with 1 or more amino acids incorporated), which drop off the ribosome during protein synthesis, or as a result of ribosome stalling. Its function is as follows. Catalyzes the release of premature peptidyl moieties from peptidyl-tRNA molecules trapped in stalled 50S ribosomal subunits, and thus maintains levels of free tRNAs and 50S ribosomes. The chain is Peptidyl-tRNA hydrolase from Bradyrhizobium diazoefficiens (strain JCM 10833 / BCRC 13528 / IAM 13628 / NBRC 14792 / USDA 110).